A 186-amino-acid polypeptide reads, in one-letter code: Putative 5'(3')-deoxyribonucleotidase (186 aa).

Catalysis depends on Asp-6, which acts as the Nucleophile. The Mg(2+) site is built by Asp-6, Asp-8, and Asp-137. Catalysis depends on Asp-8, which acts as the Proton donor.

Belongs to the 5'(3')-deoxyribonucleotidase family. Requires Mg(2+) as cofactor.

Functionally, dephosphorylates the 5' and 2'(3')-phosphates of deoxyribonucleotides. The protein is Putative 5'(3')-deoxyribonucleotidase of Bordetella pertussis (strain Tohama I / ATCC BAA-589 / NCTC 13251).